The sequence spans 449 residues: Ribulose bisphosphate carboxylase large chain (449 aa).

Residue lysine 7 is modified to N6,N6,N6-trimethyllysine. Substrate-binding residues include asparagine 116 and threonine 166. The active-site Proton acceptor is lysine 168. Residue lysine 170 coordinates substrate. Mg(2+) is bound by residues lysine 194, aspartate 196, and glutamate 197. At lysine 194 the chain carries N6-carboxylysine. The active-site Proton acceptor is the histidine 287. The substrate site is built by arginine 288, histidine 320, and serine 372.

Belongs to the RuBisCO large chain family. Type I subfamily. Heterohexadecamer of 8 large chains and 8 small chains; disulfide-linked. The disulfide link is formed within the large subunit homodimers. Mg(2+) serves as cofactor. The disulfide bond which can form in the large chain dimeric partners within the hexadecamer appears to be associated with oxidative stress and protein turnover.

The protein resides in the plastid. It localises to the chloroplast. The catalysed reaction is 2 (2R)-3-phosphoglycerate + 2 H(+) = D-ribulose 1,5-bisphosphate + CO2 + H2O. It carries out the reaction D-ribulose 1,5-bisphosphate + O2 = 2-phosphoglycolate + (2R)-3-phosphoglycerate + 2 H(+). Functionally, ruBisCO catalyzes two reactions: the carboxylation of D-ribulose 1,5-bisphosphate, the primary event in carbon dioxide fixation, as well as the oxidative fragmentation of the pentose substrate in the photorespiration process. Both reactions occur simultaneously and in competition at the same active site. In Aspidistra elatior (Cast-iron plant), this protein is Ribulose bisphosphate carboxylase large chain.